A 276-amino-acid polypeptide reads, in one-letter code: Homeobox-leucine zipper protein HOX11 (276 aa).

The interval methionine 1–leucine 92 is disordered. The segment covering leucine 39–glycine 48 has biased composition (polar residues). Residues histidine 58–aspartate 73 are compositionally biased toward gly residues. Residues serine 87–glutamine 146 constitute a DNA-binding region (homeobox). A leucine-zipper region spans residues lysine 145–proline 189. Residues alanine 214 to alanine 244 form a disordered region.

It belongs to the HD-ZIP homeobox family. Class II subfamily. As to expression, expressed in stems, leaf sheaths and blades and panicles.

Its subcellular location is the nucleus. Functionally, probable transcription factor. The polypeptide is Homeobox-leucine zipper protein HOX11 (HOX11) (Oryza sativa subsp. indica (Rice)).